We begin with the raw amino-acid sequence, 1755 residues long: Transposon Ty1-PL Gag-Pol polyprotein (1755 aa).

Polar residues-rich tracts occupy residues 1-23, 48-60, and 127-152; these read MESQ…SVTS, TKAN…TPAS, and QSQF…GNTF. Disordered regions lie at residues 1-93, 126-174, and 352-421; these read MESQ…MMTQ, PQSQ…PPPM, and GSRN…SKST. Residues 153 to 165 show a composition bias toward low complexity; sequence TDSSSADSDMTST. The tract at residues 299–401 is RNA-binding; sequence NNGIHINNKV…NSKSKTARAH (103 aa). Low complexity predominate over residues 402 to 418; the sequence is NVSTSNNSPSTDNDSIS. Ser416 carries the phosphoserine modification. The active-site For protease activity; shared with dimeric partner is Asp461. The tract at residues 583–640 is integrase-type zinc finger-like; the sequence is NVHTSESTRKYPYPFIHRMLAHANAQTIRYSLKNNTITYFNESDVDWSSAIDYQCPDC. The Integrase catalytic domain maps to 660–835; the sequence is NSYEPFQYLH…AGLDISTLLP (176 aa). Positions 671 and 736 each coordinate Mg(2+). Disordered regions lie at residues 956-1087, 1092-1111, and 1130-1187; these read SKAV…ETEK, RSPS…NIVP, and DLPL…DNET. The span at 960-969 shows a compositional bias: low complexity; the sequence is SPTDSTPPST. The span at 1005–1015 shows a compositional bias: polar residues; it reads STPQISNIEST. Residues 1038–1053 show a composition bias toward basic and acidic residues; it reads ESSHASKSKDFRHSDS. Composition is skewed to polar residues over residues 1054–1082 and 1101–1111; these read YSEN…QISD and PENNSSHNIVP. A Bipartite nuclear localization signal motif is present at residues 1178–1212; that stretch reads KKRSLEDNETEIKVSRDTWNTKNMRSLEPPRSKKR. The Reverse transcriptase Ty1/copia-type domain maps to 1338 to 1476; that stretch reads NNYYITQLDI…DILGLEIKYQ (139 aa). Mg(2+) is bound by residues Asp1346, Asp1427, Asp1428, Asp1610, Glu1652, and Asp1685. Positions 1610-1752 constitute an RNase H Ty1/copia-type domain; that stretch reads DASYGNQPYY…IKTFKLLTNK (143 aa).

In terms of assembly, the capsid protein forms a homotrimer, from which the VLPs are assembled. The protease is a homodimer, whose active site consists of two apposed aspartic acid residues. Initially, virus-like particles (VLPs) are composed of the structural unprocessed proteins Gag and Gag-Pol, and also contain the host initiator methionine tRNA (tRNA(i)-Met) which serves as a primer for minus-strand DNA synthesis, and a dimer of genomic Ty RNA. Processing of the polyproteins occurs within the particle and proceeds by an ordered pathway, called maturation. First, the protease (PR) is released by autocatalytic cleavage of the Gag-Pol polyprotein yielding capsid protein p45 and a Pol-p154 precursor protein. This cleavage is a prerequisite for subsequent processing of Pol-p154 at the remaining sites to release the mature structural and catalytic proteins. Maturation takes place prior to the RT reaction and is required to produce transposition-competent VLPs.

It localises to the cytoplasm. Its subcellular location is the nucleus. It catalyses the reaction DNA(n) + a 2'-deoxyribonucleoside 5'-triphosphate = DNA(n+1) + diphosphate. The enzyme catalyses Endonucleolytic cleavage to 5'-phosphomonoester.. Its function is as follows. Capsid protein (CA) is the structural component of the virus-like particle (VLP), forming the shell that encapsulates the retrotransposons dimeric RNA genome. The particles are assembled from trimer-clustered units and there are holes in the capsid shells that allow for the diffusion of macromolecules. CA also has nucleocapsid-like chaperone activity, promoting primer tRNA(i)-Met annealing to the multipartite primer-binding site (PBS), dimerization of Ty1 RNA and initiation of reverse transcription. Functionally, the aspartyl protease (PR) mediates the proteolytic cleavages of the Gag and Gag-Pol polyproteins after assembly of the VLP. Reverse transcriptase/ribonuclease H (RT) is a multifunctional enzyme that catalyzes the conversion of the retro-elements RNA genome into dsDNA within the VLP. The enzyme displays a DNA polymerase activity that can copy either DNA or RNA templates, and a ribonuclease H (RNase H) activity that cleaves the RNA strand of RNA-DNA heteroduplexes during plus-strand synthesis and hydrolyzes RNA primers. The conversion leads to a linear dsDNA copy of the retrotransposon that includes long terminal repeats (LTRs) at both ends. In terms of biological role, integrase (IN) targets the VLP to the nucleus, where a subparticle preintegration complex (PIC) containing at least integrase and the newly synthesized dsDNA copy of the retrotransposon must transit the nuclear membrane. Once in the nucleus, integrase performs the integration of the dsDNA into the host genome. The sequence is that of Transposon Ty1-PL Gag-Pol polyprotein (TY1B-PL) from Saccharomyces cerevisiae (strain ATCC 204508 / S288c) (Baker's yeast).